A 344-amino-acid chain; its full sequence is Probable magnesium transporter NIPA9 (344 aa).

Topologically, residues 1 to 46 (MWESICLTLAATAGNNIGKVLQKKGTIILPPLSLKLKVLRAYAENK) are cytoplasmic. Transmembrane regions (helical) follow at residues 47-67 (PWALGFLMDIVGALLMLRALS) and 68-88 (LAPVSVVQPVSGCGLAILSVF). Over 89–98 (SHFYLKEVMN) the chain is Cytoplasmic. A helical membrane pass occupies residues 99–119 (VFDWIGITVAGIGTIGVGAGG). The Extracellular segment spans residues 120–125 (EEQEAS). Residues 126 to 146 (LISVFQLLWLALVVAILFVLL) traverse the membrane as a helical segment. Over 147–166 (NAWLHIFKRQRREQELGEYE) the chain is Cytoplasmic. A helical transmembrane segment spans residues 167–187 (VVEEIIYGLESGILFGMASVV). Over 188–191 (SKMG) the chain is Extracellular. A helical transmembrane segment spans residues 192–212 (FVFVEQGFSTMFIPMCISISI). Over 213–231 (CCSGTGFFYQTRGLKHGRA) the chain is Cytoplasmic. Residues 232-252 (IVVSTCAAVASIVTGVVAGMF) traverse the membrane as a helical segment. The Extracellular segment spans residues 253–265 (ALGEKLPTSPSGR). A helical membrane pass occupies residues 266-286 (LLLLLGWLLIMLGVVLLVTSS). The Cytoplasmic segment spans residues 287 to 344 (RLIRHLPRSFRRSRQTSLERGFNIRRTTSHTPKDTNPSAVIQAATLHHLLSSPSKDKD).

Belongs to the NIPA (TC 2.A.7) family. In terms of assembly, homodimer.

It localises to the cell membrane. Its subcellular location is the early endosome. Its function is as follows. Acts as a Mg(2+) transporter. Can also transport other divalent cations such as Fe(2+), Sr(2+), Ba(2+), Mn(2+) and Co(2+) but to a much less extent than Mg(2+). This chain is Probable magnesium transporter NIPA9, found in Arabidopsis thaliana (Mouse-ear cress).